Consider the following 205-residue polypeptide: MTEFKLNYHKTHFMTSAANIHQLPKDEGMEIAFAGRSNAGKSTALNALTNQKNLARTSKTPGRTQLINLFEVEPQYKLVDLPGYGYAAVPEQMKLQWQKSLGEYLQHRECLKGVVILMDIRHPLKDLDQQMIEWAVSSDLPVLLLLTKADKLSQSARSKQVKTVREAILPFQGDVQVEAFSAQNKIGIDKLAAKLDSWFSSLLTE.

The EngB-type G domain maps to 27-201 (EGMEIAFAGR…AAKLDSWFSS (175 aa)). GTP-binding positions include 35–42 (GRSNAGKS), 62–66 (GRTQL), 80–83 (DLPG), 147–150 (TKAD), and 180–182 (FSA). 2 residues coordinate Mg(2+): Ser42 and Thr64.

Belongs to the TRAFAC class TrmE-Era-EngA-EngB-Septin-like GTPase superfamily. EngB GTPase family. Requires Mg(2+) as cofactor.

Functionally, necessary for normal cell division and for the maintenance of normal septation. The polypeptide is Probable GTP-binding protein EngB (Mannheimia succiniciproducens (strain KCTC 0769BP / MBEL55E)).